Consider the following 656-residue polypeptide: Mucin-20 (656 aa).

The first 21 residues, 1–21 (MGSVWGLAVPLLVFCWKVGVS), serve as a signal peptide directing secretion. Polar residues-rich tracts occupy residues 85 to 96 (ATSISSEVNSRD), 114 to 125 (PAASSLEAQTTS), and 159 to 170 (TTSPAPSFLDTQ). 3 disordered regions span residues 85–125 (ATSI…QTTS), 159–232 (TTSP…TQTI), and 329–348 (YLSS…LSSS). Positions 171–227 (TTSPEPSSLTTSPAPSSLITSPTPSSLTTSPAPSFLDTQTTSPAPSSLTTSPAPSSL) are enriched in low complexity. 5 consecutive repeat copies span residues 180 to 188 (TTSPAPSSL), 189 to 197 (ITSPTPSSL), 198 to 206 (TTSPAPSFL), 210 to 218 (TTSPAPSSL), and 219 to 227 (TTSPAPSSL). The interval 180–227 (TTSPAPSSLITSPTPSSLTTSPAPSFLDTQTTSPAPSSLTTSPAPSSL) is approximate repeats. N-linked (GlcNAc...) asparagine glycans are attached at residues Asn366 and Asn570. The tract at residues 399 to 603 (TAALFTSEIL…WIRKTTKHDP (205 aa)) is involved in oligomerization. A compositionally biased stretch (polar residues) spans 560-573 (STTASTSKNPNITL). The disordered stretch occupies residues 560–592 (STTASTSKNPNITLTKTTASPKPPTHPTTSAST). An interaction with MET region spans residues 604–656 (GEDGGFLLVRLTVASPKDLTEHNAREKLMNQLRRELHARMPLVHMSFLSIRRG).

Interacts with MET; oligomerization increases affinity for MET. As to expression, highly expressed in kidney. Up-regulated in renal tissues during renal injury.

The protein localises to the secreted. Its subcellular location is the apical cell membrane. It localises to the basolateral cell membrane. The protein resides in the cell projection. It is found in the microvillus membrane. Functionally, may regulate MET signaling cascade. Seems to decrease hepatocyte growth factor (HGF)-induced transient MAPK activation. Blocks GRB2 recruitment to MET thus suppressing the GRB2-RAS pathway. Inhibits HGF-induced proliferation of MMP1 and MMP9 expression. This is Mucin-20 (Muc20) from Mus musculus (Mouse).